We begin with the raw amino-acid sequence, 648 residues long: Protein kinase YegI (648 aa).

The Protein kinase domain occupies 15–302 (TTLGRELGKG…KAWVAALDSL (288 aa)). ATP-binding positions include 21-29 (LGKGGEGAV) and K41. Catalysis depends on D143, which acts as the Proton acceptor.

In terms of processing, autophosphorylated. Dephosphorylated by PphC.

Its function is as follows. Probable serine/threonine kinase. The protein is Protein kinase YegI (yegI) of Escherichia coli (strain K12).